We begin with the raw amino-acid sequence, 104 residues long: Large ribosomal subunit protein bL21 (104 aa).

This sequence belongs to the bacterial ribosomal protein bL21 family. Part of the 50S ribosomal subunit. Contacts protein L20.

Functionally, this protein binds to 23S rRNA in the presence of protein L20. The polypeptide is Large ribosomal subunit protein bL21 (Streptococcus gordonii (strain Challis / ATCC 35105 / BCRC 15272 / CH1 / DL1 / V288)).